Reading from the N-terminus, the 539-residue chain is MPTSILLIITTMIMASFCQIDITKLQHVGVLVNSPKGMKISQNFETRYLILSLIPKIEDSNSCGDQQIKQYKRLLDRLIIPLYDGLRLQKDVIVSNQESNENTDPRTKRFFGGVIGTIALGVATSAQITAAVALVEAKQARSDIEKLKEAIRDTNKAVQSVQSSIGNLIVAIKSVQDYVNKEIVPSIARLGCEAAGLQLGIALTQHYSELTNIFGDNIGSLQEKGIKLQGIASLYRTNITEIFTTSTVDKYDIYDLLFTESIKVRVIDVDLNDYSITLQVRLPLLTRLLNTQIYRVDSISYNIQNREWYIPLPSHIMTKGAFLGGADVKECIEAFSSYICPSDPGFVLNHEMESCLSGNISQCPRTVVKSDIVPRYAFVNGGVVANCITTTCTCNGIGNRINQPPDQGVKIITHKECNTIGINGMLFNTNKEGTLAFYTPNDITLNNSVALDPIDISIELNKAKSDLEESKEWIRRSNQKLDSIGNWHQSSTTIIIVLIMIIILFIINVTIIIIAVKYYRIQKRNRVDQNDKPYVLTNK.

Residues 1–18 form the signal peptide; that stretch reads MPTSILLIITTMIMASFC. Residues 19–493 are Extracellular-facing; the sequence is QIDITKLQHV…IGNWHQSSTT (475 aa). The cysteines at positions 63 and 192 are disulfide-linked. The fusion peptide stretch occupies residues 110–134; the sequence is FFGGVIGTIALGVATSAQITAAVAL. Residues 135–163 adopt a coiled-coil conformation; that stretch reads VEAKQARSDIEKLKEAIRDTNKAVQSVQS. N238 carries N-linked (GlcNAc...) asparagine; by host glycosylation. 4 disulfides stabilise this stretch: C331/C340, C355/C363, C387/C392, and C394/C417. Residue N359 is glycosylated (N-linked (GlcNAc...) asparagine; by host). Residue N446 is glycosylated (N-linked (GlcNAc...) asparagine; by host). A coiled-coil region spans residues 459–484; that stretch reads ELNKAKSDLEESKEWIRRSNQKLDSI. The helical transmembrane segment at 494 to 514 threads the bilayer; that stretch reads IIIVLIMIIILFIINVTIIII. The Cytoplasmic segment spans residues 515-539; the sequence is AVKYYRIQKRNRVDQNDKPYVLTNK.

It belongs to the paramyxoviruses fusion glycoprotein family. Homotrimer of disulfide-linked F1-F2. The inactive precursor F0 is glycosylated and proteolytically cleaved into F1 and F2 to be functionally active. The cleavage is mediated by cellular proteases during the transport and maturation of the polypeptide.

The protein resides in the virion membrane. It is found in the host cell membrane. Functionally, class I viral fusion protein. Under the current model, the protein has at least 3 conformational states: pre-fusion native state, pre-hairpin intermediate state, and post-fusion hairpin state. During viral and plasma cell membrane fusion, the heptad repeat (HR) regions assume a trimer-of-hairpins structure, positioning the fusion peptide in close proximity to the C-terminal region of the ectodomain. The formation of this structure appears to drive apposition and subsequent fusion of viral and plasma cell membranes. Directs fusion of viral and cellular membranes leading to delivery of the nucleocapsid into the cytoplasm. This fusion is pH independent and occurs directly at the outer cell membrane. The trimer of F1-F2 (F protein) probably interacts with HN at the virion surface. Upon HN binding to its cellular receptor, the hydrophobic fusion peptide is unmasked and interacts with the cellular membrane, inducing the fusion between cell and virion membranes. Later in infection, F proteins expressed at the plasma membrane of infected cells could mediate fusion with adjacent cells to form syncytia, a cytopathic effect that could lead to tissue necrosis. The protein is Fusion glycoprotein F0 (F) of Homo sapiens (Human).